A 340-amino-acid chain; its full sequence is Phosphoribosylformylglycinamidine cyclo-ligase (340 aa).

This sequence belongs to the AIR synthase family.

It is found in the cytoplasm. The catalysed reaction is 2-formamido-N(1)-(5-O-phospho-beta-D-ribosyl)acetamidine + ATP = 5-amino-1-(5-phospho-beta-D-ribosyl)imidazole + ADP + phosphate + H(+). Its pathway is purine metabolism; IMP biosynthesis via de novo pathway; 5-amino-1-(5-phospho-D-ribosyl)imidazole from N(2)-formyl-N(1)-(5-phospho-D-ribosyl)glycinamide: step 2/2. In Streptococcus pneumoniae serotype 2 (strain D39 / NCTC 7466), this protein is Phosphoribosylformylglycinamidine cyclo-ligase.